Reading from the N-terminus, the 499-residue chain is Isoflavone 2'-hydroxylase (499 aa).

Cysteine 436 provides a ligand contact to heme.

The protein belongs to the cytochrome P450 family. It depends on heme as a cofactor.

The protein resides in the membrane. The enzyme catalyses a 2'-unsubstituted isoflavone + reduced [NADPH--hemoprotein reductase] + O2 = a 2'-hydroxyisoflavone + oxidized [NADPH--hemoprotein reductase] + H2O + H(+). In terms of biological role, catalyzes the hydroxylation of isoflavones, daidzein and formononetin, to yield 2'-hydroxyisoflavones, 2'-hydroxydaidzein, and 2'-hydroxyformononetin, respectively. In Glycyrrhiza echinata (Licorice), this protein is Isoflavone 2'-hydroxylase (CYP81E1).